The sequence spans 143 residues: Zinc-containing ferredoxin (143 aa).

The interval Pro-13–Thr-60 is N-terminal extension. Zn(2+) is bound by residues His-31, His-34, and His-58. 4Fe-4S ferredoxin-type domains follow at residues Thr-60–Asn-89 and Lys-115–Pro-143. [3Fe-4S] cluster contacts are provided by Cys-69 and Cys-75. [4Fe-4S] cluster is bound at residue Cys-79. Residue Asp-117 coordinates Zn(2+). [4Fe-4S] cluster contacts are provided by Cys-124, Cys-127, and Cys-130. Residue Cys-134 coordinates [3Fe-4S] cluster.

Requires [3Fe-4S] cluster as cofactor. [4Fe-4S] cluster is required as a cofactor. The cofactor is Zn(2+).

Functionally, ferredoxins are iron-sulfur proteins that transfer electrons in a wide variety of metabolic reactions. The protein is Zinc-containing ferredoxin (zfx) of Thermoplasma acidophilum (strain ATCC 25905 / DSM 1728 / JCM 9062 / NBRC 15155 / AMRC-C165).